A 185-amino-acid polypeptide reads, in one-letter code: Alcohol dehydrogenase 1 (185 aa).

Residues 10 to 15 (GLGGVG), aspartate 34, lysine 39, 103 to 105 (VGV), and arginine 180 each bind NAD(+).

The protein belongs to the zinc-containing alcohol dehydrogenase family. Class-I subfamily. Homodimer. The cofactor is Zn(2+).

Its subcellular location is the cytoplasm. It carries out the reaction a primary alcohol + NAD(+) = an aldehyde + NADH + H(+). The enzyme catalyses a secondary alcohol + NAD(+) = a ketone + NADH + H(+). This Anas platyrhynchos (Mallard) protein is Alcohol dehydrogenase 1 (ADH1).